The following is a 361-amino-acid chain: Probable dual-specificity RNA methyltransferase RlmN (361 aa).

E104 (proton acceptor) is an active-site residue. The 234-residue stretch at H110–D343 folds into the Radical SAM core domain. Residues C117 and C348 are joined by a disulfide bond. Residues C124, C128, and C131 each contribute to the [4Fe-4S] cluster site. S-adenosyl-L-methionine is bound by residues G174 to E175, S206, S229 to H231, and N305. C348 functions as the S-methylcysteine intermediate in the catalytic mechanism.

The protein belongs to the radical SAM superfamily. RlmN family. [4Fe-4S] cluster is required as a cofactor.

The protein localises to the cytoplasm. It carries out the reaction adenosine(2503) in 23S rRNA + 2 reduced [2Fe-2S]-[ferredoxin] + 2 S-adenosyl-L-methionine = 2-methyladenosine(2503) in 23S rRNA + 5'-deoxyadenosine + L-methionine + 2 oxidized [2Fe-2S]-[ferredoxin] + S-adenosyl-L-homocysteine. The enzyme catalyses adenosine(37) in tRNA + 2 reduced [2Fe-2S]-[ferredoxin] + 2 S-adenosyl-L-methionine = 2-methyladenosine(37) in tRNA + 5'-deoxyadenosine + L-methionine + 2 oxidized [2Fe-2S]-[ferredoxin] + S-adenosyl-L-homocysteine. Specifically methylates position 2 of adenine 2503 in 23S rRNA and position 2 of adenine 37 in tRNAs. This is Probable dual-specificity RNA methyltransferase RlmN from Bacillus licheniformis (strain ATCC 14580 / DSM 13 / JCM 2505 / CCUG 7422 / NBRC 12200 / NCIMB 9375 / NCTC 10341 / NRRL NRS-1264 / Gibson 46).